Here is a 130-residue protein sequence, read N- to C-terminus: MRMYSSDAHERPPSPSLGTTPPHPLPPTGSPRPRQDSAAGNSEEREPRGLRRASGVGSSCKRPTVCMGRQQGLPFCTVCGYRCSSPERTRGRCAVGKVRVAGGGGAPGGGAGMRCCGCRERNINKELELF.

The interval 1 to 62 is disordered; that stretch reads MRMYSSDAHE…ASGVGSSCKR (62 aa). The segment covering 21-30 has biased composition (pro residues); it reads PPHPLPPTGS.

This is an uncharacterized protein from Homo sapiens (Human).